The following is a 625-amino-acid chain: MNMIKKNKKKSFLCTIFSTINVLHGLIAISPIYIIKESFVNNLGFKIDKLAIFGILSIIFWTLFFIIFLKYLILIVSINNSGEGGILTLMSITAKKINSKSTFVIVILGLISMCLFFGDIIIIPSISIISVIEEISIYYLSFEKFIFIISIAIFTFLFFIQKKIKNEFNNIFSFLISIWFILVGLIGLKGIYINPEILLAINPKYLINFFKHYKLNAFFVFGTLILLISISEILYINIGRFSKLEIRKSWLFFVFPMIMINCFGQGSIILLYPESISHPFFFLVPDWARFFTFTFAIIISIISSQNIISSIFYLTRQAVRLGYLPNIKIFYTSEVKSRRIYIPCINWIFYLSAVIQISIFKNLHNLILIYGIGSIITMSLTTFFSLLFFKKKFEKFKILKITFLLTILILEFFIFISNSYKIICGGWFPIVFGIIFFTIMITWKVETFNLLLHTHNNSNSIKLFIKNLRKNNLLKVNGTSVFMSSMDNTIPLSIIHNIKHNKVLHEKIIFLNIKTEDSPFIKKECRVEIEKLNNGFWGVKAYYGFKETPDIKEIFHFCNLLGISLNIMETSFFISHESLILGKRPWYLAIRAKLFIFLKRNSLGSTYQYSIPLDRVIALGIQVKI.

12 consecutive transmembrane segments (helical) span residues 15-35 (TIFS…IYII), 58-78 (IIFW…IVSI), 103-123 (FVIV…IIII), 140-160 (LSFE…LFFI), 171-191 (IFSF…LKGI), 218-238 (FFVF…YINI), 251-271 (LFFV…IILL), 282-302 (FLVP…ISII), 340-360 (IYIP…ISIF), 366-386 (LILI…FFSL), 396-416 (FKIL…FIFI), and 422-442 (IICG…IMIT).

It belongs to the HAK/KUP transporter (TC 2.A.72) family.

It localises to the cell membrane. The enzyme catalyses K(+)(in) + H(+)(in) = K(+)(out) + H(+)(out). In terms of biological role, responsible for the low-affinity transport of potassium into the cell. Likely operates as a K(+):H(+) symporter. This chain is Low affinity potassium transport system protein Kup, found in Wigglesworthia glossinidia brevipalpis.